Here is a 163-residue protein sequence, read N- to C-terminus: Nucleotide-binding protein YajQ (163 aa).

It belongs to the YajQ family.

In terms of biological role, nucleotide-binding protein. The polypeptide is Nucleotide-binding protein YajQ (Shigella dysenteriae serotype 1 (strain Sd197)).